The sequence spans 32 residues: MSDIN-like toxin proprotein 11 (32 aa).

The propeptide occupies 1 to 10; the sequence is MSDINATRLP. A disordered region spans residues 1-32; that stretch reads MSDINATRLPGMEPPSPMPCVGDADNFTLTRG. The cyclopeptide (Gly-Pro) cross-link spans 11–19; that stretch reads GMEPPSPMP. The propeptide occupies 20 to 32; the sequence is CVGDADNFTLTRG.

The protein belongs to the MSDIN fungal toxin family. In terms of processing, processed by the macrocyclase-peptidase enzyme POPB to yield a toxic cyclic nonapeptide. POPB first removes 10 residues from the N-terminus. Conformational trapping of the remaining peptide forces the enzyme to release this intermediate rather than proceed to macrocyclization. The enzyme rebinds the remaining peptide in a different conformation and catalyzes macrocyclization of the N-terminal 9 residues.

Functionally, probable toxin that belongs to the MSDIN-like toxin family responsible for a large number of food poisoning cases and deaths. This Amanita bisporigera (Destroying angel) protein is MSDIN-like toxin proprotein 11.